Reading from the N-terminus, the 64-residue chain is Large ribosomal subunit protein bL35 (64 aa).

Residues 1 to 14 show a composition bias toward basic residues; sequence MKNKTHKGTAKRVK. The interval 1-29 is disordered; the sequence is MKNKTHKGTAKRVKVTGSGKLVREQANRR.

Belongs to the bacterial ribosomal protein bL35 family.

The chain is Large ribosomal subunit protein bL35 from Corynebacterium glutamicum (strain R).